The sequence spans 156 residues: Ribosomal RNA large subunit methyltransferase H (156 aa).

Residues leucine 73, glycine 104, and 123–128 (VSSLTL) contribute to the S-adenosyl-L-methionine site.

This sequence belongs to the RNA methyltransferase RlmH family. As to quaternary structure, homodimer.

The protein resides in the cytoplasm. The enzyme catalyses pseudouridine(1915) in 23S rRNA + S-adenosyl-L-methionine = N(3)-methylpseudouridine(1915) in 23S rRNA + S-adenosyl-L-homocysteine + H(+). In terms of biological role, specifically methylates the pseudouridine at position 1915 (m3Psi1915) in 23S rRNA. This Paraburkholderia xenovorans (strain LB400) protein is Ribosomal RNA large subunit methyltransferase H.